The following is a 185-amino-acid chain: MTAFYKLCGMSMLSLVLADCTFLSANKPYDRDHDGELIVHMKDVNTHKEVGTITISPYIHDGNQEGMLITPHLYNLPANTTHGMHIHINPSCEDNGIAAGGHWDPDNTQKHLGPYNDNGHKGDLPVLVVNADGTATEPVVAPKLNSLEELAGHSLMLHAGGDNYSDKPQPLGGGGARMWCGVIAD.

A signal peptide spans 1-18 (MTAFYKLCGMSMLSLVLA). The Cu cation site is built by histidine 85, histidine 87, and histidine 102. Cysteine 92 and cysteine 180 form a disulfide bridge. The Zn(2+) site is built by histidine 102, histidine 111, histidine 120, and aspartate 123. Histidine 158 is a binding site for Cu cation.

Belongs to the Cu-Zn superoxide dismutase family. Homodimer. The cofactor is Cu cation. Zn(2+) serves as cofactor.

It is found in the periplasm. The catalysed reaction is 2 superoxide + 2 H(+) = H2O2 + O2. Destroys radicals which are normally produced within the cells and which are toxic to biological systems. In Francisella tularensis subsp. holarctica (strain LVS), this protein is Superoxide dismutase [Cu-Zn] (sodC).